We begin with the raw amino-acid sequence, 151 residues long: UPF0336 protein Franean1_6066 (151 aa).

The region spanning Val8–Phe127 is the MaoC-like domain.

Belongs to the UPF0336 family.

The protein is UPF0336 protein Franean1_6066 of Parafrankia sp. (strain EAN1pec).